The chain runs to 417 residues: Phosphoglycerate kinase (417 aa).

(2R)-3-phosphoglycerate is bound by residues valine 23, aspartate 24, phenylalanine 25, asparagine 26, glutamine 39, arginine 40, serine 63, histidine 64, glycine 66, arginine 67, leucine 122, arginine 123, histidine 170, and arginine 171. Glycine 214 serves as a coordination point for ADP. Glycine 214 provides a ligand contact to CDP. Alanine 215 and lysine 216 together coordinate AMP. Alanine 215 contacts ATP. Alanine 215 contributes to the Mg(2+) binding site. Aspartate 219 contacts CDP. Aspartate 219 is a binding site for Mg(2+). Lysine 220 contributes to the AMP binding site. Lysine 220 is a binding site for ATP. An ADP-binding site is contributed by glycine 238. Glycine 238 contributes to the CDP binding site. Glycine 239 and glycine 313 together coordinate AMP. The ATP site is built by glycine 239 and glycine 313. Residues glycine 338, alanine 340, and phenylalanine 343 each contribute to the CDP site. An ADP-binding site is contributed by phenylalanine 343. Glutamate 344 serves as a coordination point for AMP. Positions 344, 375, and 376 each coordinate ATP. Aspartate 375 provides a ligand contact to Mg(2+).

It belongs to the phosphoglycerate kinase family. Monomer. Requires Mg(2+) as cofactor.

It localises to the cytoplasm. Its subcellular location is the mitochondrion. It catalyses the reaction (2R)-3-phosphoglycerate + ATP = (2R)-3-phospho-glyceroyl phosphate + ADP. The protein operates within carbohydrate degradation; glycolysis; pyruvate from D-glyceraldehyde 3-phosphate: step 2/5. In terms of biological role, catalyzes one of the two ATP producing reactions in the glycolytic pathway via the reversible conversion of 1,3-diphosphoglycerate to 3-phosphoglycerate. Both L- and D- forms of purine and pyrimidine nucleotides can be used as substrates, but the activity is much lower on pyrimidines. Negatively regulates the biosynthesis of acetyl-CoA from pyruvate in the mitochondrion. The polypeptide is Phosphoglycerate kinase (pgk1) (Hypocrea rufa (Trichoderma viride)).